The primary structure comprises 458 residues: Argininosuccinate lyase (458 aa).

It belongs to the lyase 1 family. Argininosuccinate lyase subfamily.

It localises to the cytoplasm. The enzyme catalyses 2-(N(omega)-L-arginino)succinate = fumarate + L-arginine. It participates in amino-acid biosynthesis; L-arginine biosynthesis; L-arginine from L-ornithine and carbamoyl phosphate: step 3/3. This is Argininosuccinate lyase from Acetivibrio thermocellus (strain ATCC 27405 / DSM 1237 / JCM 9322 / NBRC 103400 / NCIMB 10682 / NRRL B-4536 / VPI 7372) (Clostridium thermocellum).